Here is a 358-residue protein sequence, read N- to C-terminus: MAPQNLSTFCLLLLYLIGTVIAGRDFYKILGVPRSASIKDIKKAYRKLALQLHPDRNPDDPQAQEKFQDLGAAYEVLSDSEKRKQYDTYGEEGLKDGHQSSHGDIFSHFFGDFGFMFGGTPRQQDRNIPRGSDIIVDLEVTLEEVYAGNFVEVVRNKPVARQAPGKRKCNCRQEMRTTQLGPGRFQMTQEVVCDECPNVKLVNEERTLEVEIEPGVRDGMEYPFIGEGEPHVDGEPGDLRFRIKVVKHRIFERRGDDLYTNVTVSLVEALVGFEMDITHLDGHKVHISRDKITRPGAKLWKKGEGLPNFDNNNIKGSLIITFDVDFPKEQLTEEAKEGIKQLLKQGPVQKVYNGLQGY.

The signal sequence occupies residues 1-22 (MAPQNLSTFCLLLLYLIGTVIA). The J domain maps to 25-90 (DFYKILGVPR…EKRKQYDTYG (66 aa)). Phosphothreonine is present on T188. A glycan (N-linked (GlcNAc...) asparagine) is linked at N261.

As to quaternary structure, part of a large chaperone multiprotein complex comprising DNAJB11, HSP90B1, HSPA5, HYOU, PDIA2, PDIA4, PDIA6, PPIB, SDF2L1, UGGT1 and very small amounts of ERP29, but not, or at very low levels, CALR nor CANX. Binds to denatured substrates in an ATP-independent manner. Interacts via the J domain with HSPA5 in an ATP-dependent manner. Post-translationally, contains high-mannose Endo H-sensitive carbohydrates. Cys-169, Cys-171, Cys-193 and Cys-196 form intramolecular disulfide bonds. The preferential partner for each Cys is not known.

The protein localises to the endoplasmic reticulum lumen. Functionally, as a co-chaperone for HSPA5 it is required for proper folding, trafficking or degradation of proteins. Binds directly to both unfolded proteins that are substrates for ERAD and nascent unfolded peptide chains, but dissociates from the HSPA5-unfolded protein complex before folding is completed. May help recruiting HSPA5 and other chaperones to the substrate. Stimulates HSPA5 ATPase activity. It is necessary for maturation and correct trafficking of PKD1. In Mus musculus (Mouse), this protein is DnaJ homolog subfamily B member 11 (Dnajb11).